The chain runs to 207 residues: MKLLKISILRQSTFKNKKYNLFKIKTNRDFNPLVIGTKIRRNLIKETKGTKITQASLFVLNKKSKEKLYHSLNEFTNIEEISEKTNEIIKNLERLKIKLVNKNLKKKIICITLTKENSFFKEIYKTIKISNLNQKICTIKSHNVEIKLLLKIEKEKGIKFNPIETINFIIPKKNNENNSSLFLETIRNDQTFTELYQSLKLIYNQQI.

Belongs to the RNA polymerase alpha chain family. In plastids the minimal PEP RNA polymerase catalytic core is composed of four subunits: alpha, beta, beta', and beta''. When a (nuclear-encoded) sigma factor is associated with the core the holoenzyme is formed, which can initiate transcription.

It is found in the plastid. The protein resides in the chloroplast. It carries out the reaction RNA(n) + a ribonucleoside 5'-triphosphate = RNA(n+1) + diphosphate. DNA-dependent RNA polymerase catalyzes the transcription of DNA into RNA using the four ribonucleoside triphosphates as substrates. The sequence is that of DNA-directed RNA polymerase subunit alpha (rpoA) from Euglena anabaena (Euglenaria anabaena).